The chain runs to 60 residues: Large ribosomal subunit protein uL30 (60 aa).

The protein belongs to the universal ribosomal protein uL30 family. Part of the 50S ribosomal subunit.

In Leifsonia xyli subsp. xyli (strain CTCB07), this protein is Large ribosomal subunit protein uL30.